A 221-amino-acid chain; its full sequence is Probable glutathione S-transferase parC (221 aa).

A GST N-terminal domain is found at 4–83 (EEVILLDFWP…YIEEVWKDKA (80 aa)). Glutathione-binding positions include Ser14, Lys41, Ile55, and 67 to 68 (ES). A GST C-terminal domain is found at 90–214 (DPYDRAQARF…PKVLEFVKVL (125 aa)).

This sequence belongs to the GST superfamily. Phi family. In terms of tissue distribution, abundant in seedlings and roots. It is also found in the shoot tips, flowers and leaves.

It catalyses the reaction RX + glutathione = an S-substituted glutathione + a halide anion + H(+). Its function is as follows. Conjugation of reduced glutathione to a wide number of exogenous and endogenous hydrophobic electrophiles. The polypeptide is Probable glutathione S-transferase parC (PARC) (Nicotiana tabacum (Common tobacco)).